A 386-amino-acid polypeptide reads, in one-letter code: MAESNFVDYVKIYCRSGKGGRGSTHMRREKYTPNGGPDGGDGGRGGHVILRGNRNYWTLLHLRYDRHAMAGHGESGSKNRSFGKDGADKIIEVPCGTVVYNAETGEYVCDVTEHGQEVILLKGGRGGLGNWHFKTATRQAPRFAQPGEPMQEMTVILELKLLADVGLVGFPNAGKSTLLSAISAAKPKIADYPFTTLEPNLGIVSYRDGQSFVMADIPGIIEGASEGKGLGLRFLRHIERNSLLLFMIPADSDDIRKDYEVLLNELKTFNPEMLDKQRVLAITKSDMLDQELMDEIEPTLPEGIPHVFISSVSGLGISVLKDILWTELNKESNKIEAIVHRPKDVSRLQQELKDMGEDEELDYEYEDDGDEDDLDYEYEEEDWEDK.

One can recognise an Obg domain in the interval 4–162; sequence SNFVDYVKIY…MTVILELKLL (159 aa). Positions 18–45 are disordered; it reads KGGRGSTHMRREKYTPNGGPDGGDGGRG. Residues 36–45 show a composition bias toward gly residues; the sequence is GPDGGDGGRG. An OBG-type G domain is found at 163-329; sequence ADVGLVGFPN…LKDILWTELN (167 aa). Residues 169–176, 194–198, 216–219, 283–286, and 310–312 contribute to the GTP site; these read GFPNAGKS, FTTLE, DIPG, TKSD, and SSV. 2 residues coordinate Mg(2+): S176 and T196. Residues 351–386 form a disordered region; the sequence is ELKDMGEDEELDYEYEDDGDEDDLDYEYEEEDWEDK. Over residues 356-386 the composition is skewed to acidic residues; it reads GEDEELDYEYEDDGDEDDLDYEYEEEDWEDK.

The protein belongs to the TRAFAC class OBG-HflX-like GTPase superfamily. OBG GTPase family. Monomer. Mg(2+) serves as cofactor.

It is found in the cytoplasm. An essential GTPase which binds GTP, GDP and possibly (p)ppGpp with moderate affinity, with high nucleotide exchange rates and a fairly low GTP hydrolysis rate. Plays a role in control of the cell cycle, stress response, ribosome biogenesis and in those bacteria that undergo differentiation, in morphogenesis control. This Bacteroides fragilis (strain YCH46) protein is GTPase Obg.